The chain runs to 616 residues: Dihydroxy-acid dehydratase (616 aa).

Position 81 (Asp81) interacts with Mg(2+). Cys122 serves as a coordination point for [2Fe-2S] cluster. The Mg(2+) site is built by Asp123 and Lys124. Lys124 carries the N6-carboxylysine modification. Cys195 contributes to the [2Fe-2S] cluster binding site. Glu491 contributes to the Mg(2+) binding site. The active-site Proton acceptor is Ser517.

Belongs to the IlvD/Edd family. In terms of assembly, homodimer. It depends on [2Fe-2S] cluster as a cofactor. The cofactor is Mg(2+).

It catalyses the reaction (2R)-2,3-dihydroxy-3-methylbutanoate = 3-methyl-2-oxobutanoate + H2O. The catalysed reaction is (2R,3R)-2,3-dihydroxy-3-methylpentanoate = (S)-3-methyl-2-oxopentanoate + H2O. Its pathway is amino-acid biosynthesis; L-isoleucine biosynthesis; L-isoleucine from 2-oxobutanoate: step 3/4. It participates in amino-acid biosynthesis; L-valine biosynthesis; L-valine from pyruvate: step 3/4. In terms of biological role, functions in the biosynthesis of branched-chain amino acids. Catalyzes the dehydration of (2R,3R)-2,3-dihydroxy-3-methylpentanoate (2,3-dihydroxy-3-methylvalerate) into 2-oxo-3-methylpentanoate (2-oxo-3-methylvalerate) and of (2R)-2,3-dihydroxy-3-methylbutanoate (2,3-dihydroxyisovalerate) into 2-oxo-3-methylbutanoate (2-oxoisovalerate), the penultimate precursor to L-isoleucine and L-valine, respectively. The polypeptide is Dihydroxy-acid dehydratase (Klebsiella pneumoniae subsp. pneumoniae (strain ATCC 700721 / MGH 78578)).